We begin with the raw amino-acid sequence, 50 residues long: PsaJ-like protein asl3190 (50 aa).

Residues 21–41 (VLAVISISVAFSTWAIFNYIF) form a helical membrane-spanning segment.

Belongs to the PsaJ family.

The protein resides in the cellular thylakoid membrane. In Nostoc sp. (strain PCC 7120 / SAG 25.82 / UTEX 2576), this protein is PsaJ-like protein asl3190.